The chain runs to 336 residues: uncharacterized protein (336 aa).

The region spanning 123–323 is the ATP-grasp domain; sequence KTLMRDSGVP…YSSLINGILD (201 aa).

The protein belongs to the D-alanine--D-alanine ligase family.

Its function is as follows. Could be involved in the biosynthesis of a cell wall component. This is an uncharacterized protein from Sinorhizobium fredii (strain NBRC 101917 / NGR234).